Here is a 247-residue protein sequence, read N- to C-terminus: MMNESQPKLKYKRILLKFSGEALMGKSQFGIDPSVLDSLARDIAELIHMGVEVGLVLGGGNLFRGKALSQAGVGRVTGDHMGMLATVMNALALRDALERIDLPARIMSAIPMLGVVDPYHRRKAITHLRNGQVVIFAAGTGNPFFTTDTAACLRAIEIGADIVLKATKVDGVYSADPLKNSDAKRYDYLTYKEVLTKGLEVMDSTAICLCQDQGMPLQVFDMAAPKALKRIVTGERVGTIVGANHDQ.

Lys-17–Gly-20 serves as a coordination point for ATP. Gly-59 contributes to the UMP binding site. 2 residues coordinate ATP: Gly-60 and Arg-64. Residues Asp-79 and Thr-140–Thr-147 contribute to the UMP site. The ATP site is built by Thr-167, Tyr-173, and Asp-176.

The protein belongs to the UMP kinase family. Homohexamer.

Its subcellular location is the cytoplasm. The enzyme catalyses UMP + ATP = UDP + ADP. It functions in the pathway pyrimidine metabolism; CTP biosynthesis via de novo pathway; UDP from UMP (UMPK route): step 1/1. With respect to regulation, inhibited by UTP. In terms of biological role, catalyzes the reversible phosphorylation of UMP to UDP. The chain is Uridylate kinase from Legionella pneumophila subsp. pneumophila (strain Philadelphia 1 / ATCC 33152 / DSM 7513).